We begin with the raw amino-acid sequence, 473 residues long: Photosystem II CP43 reaction center protein (473 aa).

Residues 1 to 14 (MKTLYSLRRFYPVE) constitute a propeptide that is removed on maturation. Thr-15 carries the post-translational modification N-acetylthreonine. Thr-15 carries the phosphothreonine modification. 5 consecutive transmembrane segments (helical) span residues 69–93 (LFEV…PHLA), 134–155 (LIGP…KDRS), 178–200 (KALY…RKIT), 255–275 (KPFA…LSYS), and 291–312 (WFNN…ASQA). Glu-367 contributes to the [CaMn4O5] cluster binding site. The chain crosses the membrane as a helical span at residues 447 to 471 (RARAAAAGFEKGIDRDFEPVLSMNP).

It belongs to the PsbB/PsbC family. PsbC subfamily. As to quaternary structure, PSII is composed of 1 copy each of membrane proteins PsbA, PsbB, PsbC, PsbD, PsbE, PsbF, PsbH, PsbI, PsbJ, PsbK, PsbL, PsbM, PsbT, PsbX, PsbY, PsbZ, Psb30/Ycf12, at least 3 peripheral proteins of the oxygen-evolving complex and a large number of cofactors. It forms dimeric complexes. It depends on Binds multiple chlorophylls and provides some of the ligands for the Ca-4Mn-5O cluster of the oxygen-evolving complex. It may also provide a ligand for a Cl- that is required for oxygen evolution. PSII binds additional chlorophylls, carotenoids and specific lipids. as a cofactor.

It is found in the plastid. It localises to the chloroplast thylakoid membrane. Functionally, one of the components of the core complex of photosystem II (PSII). It binds chlorophyll and helps catalyze the primary light-induced photochemical processes of PSII. PSII is a light-driven water:plastoquinone oxidoreductase, using light energy to abstract electrons from H(2)O, generating O(2) and a proton gradient subsequently used for ATP formation. This is Photosystem II CP43 reaction center protein from Cycas taitungensis (Prince sago).